Here is a 520-residue protein sequence, read N- to C-terminus: MASNDKGMAPSLGSPWASQMGPWDAILKAVKDQLPSLDSDSPLSDYGEEELFIFQRNQTSLIPDLSEELAEDPADGDKSRAWVAAAEESLPEPVLVPAELATEPGCRQNTRTKDASSQEGRDPGRPFESSGEVSALLGMAEEPPRWLEGDLGSLSFNTKGSQGPPWDPQAEATLSCHEGDPKAEPLSTASQESVNRRALRQERRKMIETDILQKVTRDACGPTSSDKGGVKEAPCHAAESAPRSKMPLVEPPEGPPVLSLQQLEAWDLDDILQSLAGQEDNQGNRAPGTVWWAADHRQVQDRMVPSAHNRLMEQLALLCTTQSKASACARKVPADTPQDTKEADSGSRCASRKQGSQAGPGPQLAQGMRLNAESPTIFIDLRQMELPDHLSPESSSHSSSDSEEEEEEEMAALGDAEGASPSSLGLRTCTGKSQLLQQLRAFQKGTAQPELPASKGPAGGRAQAPEDTAGSRTGRKQHMKLCAKGQSAQARLPRGRPRALGDVPEPGAAREALMPPLEQL.

Disordered regions lie at residues 93–202, 217–256, 328–366, and 388–520; these read PVLV…LRQE, RDAC…EGPP, CARK…QLAQ, and DHLS…LEQL. Over residues 111-125 the composition is skewed to basic and acidic residues; that stretch reads RTKDASSQEGRDPGR. S161 carries the phosphoserine modification. Phosphoserine is present on S351. Over residues 401–410 the composition is skewed to acidic residues; it reads DSEEEEEEEM. Positions 420–437 are enriched in polar residues; the sequence is SPSSLGLRTCTGKSQLLQ.

Expressed in respiratory ciliated cells (at protein level).

It is found in the dynein axonemal particle. The protein resides in the cytoplasm. In terms of biological role, in cyliated cells, dynein axonemal particle-specific protein required for deployment of ODA to the axoneme. Interacts with outer dynein arm (ODA) subunits. The chain is Dynein axonemal assembly factor 8 from Homo sapiens (Human).